The primary structure comprises 210 residues: Outer-membrane lipoprotein LolB (210 aa).

Positions 1–29 (MSLISNNEERSLRVRYCIAIALSALLISG) are cleaved as a signal peptide. Cys-30 carries the N-palmitoyl cysteine lipid modification. Residue Cys-30 is the site of S-diacylglycerol cysteine attachment.

It belongs to the LolB family. Monomer.

Its subcellular location is the cell outer membrane. Functionally, plays a critical role in the incorporation of lipoproteins in the outer membrane after they are released by the LolA protein. This Coxiella burnetii (strain CbuK_Q154) (Coxiella burnetii (strain Q154)) protein is Outer-membrane lipoprotein LolB.